Reading from the N-terminus, the 361-residue chain is Palmitoyltransferase ZDHHC2 (361 aa).

Over 1–15 (MAPSGSRSFDCWRVL) the chain is Cytoplasmic. Residues 16–36 (YWIPVLFISLIVAWSYYAYVV) form a helical membrane-spanning segment. The Lumenal portion of the chain corresponds to 37–50 (QLCIETIENMGEKT). A helical transmembrane segment spans residues 51–71 (VYLLIYHLLFLMFVWSYWQTI). The Cytoplasmic portion of the chain corresponds to 72 to 167 (YSKPMNPLKE…NNCVGFANYK (96 aa)). The DHHC domain occupies 124–174 (RYCDRCLLLKPDRCHHCSACDMCILKMDHHCPWVNNCVGFANYKFFMLFLA). The active-site S-palmitoyl cysteine intermediate is the Cys154. Residues 168 to 188 (FFMLFLAYSLLYCLFVTATDM) form a helical membrane-spanning segment. Over 189 to 207 (QYFIQFWTNGLPDTQAKFH) the chain is Lumenal. A helical membrane pass occupies residues 208 to 228 (IMFLFFAASTFSVSLAFLFAY). Over 229–361 (HCWLVCKNRS…NPALTIEKET (133 aa)) the chain is Cytoplasmic. The segment at 296-361 (NPDPEQPSIP…NPALTIEKET (66 aa)) is mediates localization to plasma membrane and recycling endosomes. A compositionally biased stretch (pro residues) spans 299 to 308 (PEQPSIPPGR). The disordered stretch occupies residues 299–361 (PEQPSIPPGR…NPALTIEKET (63 aa)). The span at 331 to 340 (SRLLNNGQTD) shows a compositional bias: polar residues. The Non-canonical dileucine endocytic signal motif lies at 333–334 (LL). Residues 352 to 355 (NPAL) carry the NPxY-like endocytic signal motif.

This sequence belongs to the DHHC palmitoyltransferase family. Monomer. Homodimer. The monomeric form has a higher catalytic activity. In terms of processing, autopalmitoylated.

The protein localises to the endoplasmic reticulum membrane. Its subcellular location is the golgi apparatus membrane. It is found in the postsynaptic density. The protein resides in the postsynaptic recycling endosome membrane. It localises to the cell membrane. The catalysed reaction is L-cysteinyl-[protein] + hexadecanoyl-CoA = S-hexadecanoyl-L-cysteinyl-[protein] + CoA. It catalyses the reaction L-cysteinyl-[protein] + tetradecanoyl-CoA = S-tetradecanoyl-L-cysteinyl-[protein] + CoA. It carries out the reaction L-cysteinyl-[protein] + octadecanoyl-CoA = S-octadecanoyl-L-cysteinyl-[protein] + CoA. Functionally, palmitoyltransferase that catalyzes the addition of palmitate onto various protein substrates and is involved in a variety of cellular processes. Has no stringent fatty acid selectivity and in addition to palmitate can also transfer onto target proteins myristate from tetradecanoyl-CoA and stearate from octadecanoyl-CoA. This chain is Palmitoyltransferase ZDHHC2, found in Danio rerio (Zebrafish).